The chain runs to 347 residues: Pre-B-cell leukemia transcription factor 1 (347 aa).

Residues 1–37 (MDDQPRLMHSHPGVGMAGHPSLSQHMQDGTGANEGDV) are disordered. The PBC domain occupies 38 to 232 (GRKQDIGDIL…VMILRSRFLD (195 aa)). The PBC-A stretch occupies residues 45-124 (DILQQIMTIT…EGVAGPEKGG (80 aa)). A PBC-B region spans residues 127-232 (AAAAAAAAAS…VMILRSRFLD (106 aa)). Residues 233-295 (ARRKRRNFNK…NKRIRYKKNI (63 aa)) constitute a DNA-binding region (homeobox; TALE-type). The segment covering 318-331 (VHGSQANSPSTPSS) has biased composition (polar residues). The segment at 318–347 (VHGSQANSPSTPSSAGGYPSPCYQSDRRIQ) is disordered.

It belongs to the TALE/PBX homeobox family. In terms of assembly, forms a heterodimer with isoform 2 of meis1; the interaction is necessary for neural fate induction. Shows broad, weak expression from blastula through gastrula stages. At stage 14/15, expressed in a broad arc that gives rise to the forebrain and eyes. More intensely expressed in the lateral neural folds (presumptive neural crest) and as horizontal stripes in the posterior neural plate that give rise to the hindbrain. As development proceeds, expression progresses posteriorly along the neural folds and at stage 21, expression is pronounced in the prospective hindbrain and in migratory neural crest cells. At later stages (stage 26), expression becomes intense within the dorsal portion of the forebrain, and in the optic cup, caudal branchial arch, peripheral to the pronephric anlage, and in the dorsal anterior half of the spinal cord. Expression remains robust in the hindbrain but gradually becomes more restricted. At stage 28, expressed in the dorsal lateral portion of the neural tube and in the somatic layer of the lateral plate mesoderm that surrounds the pronephric anlage.

It is found in the nucleus. Functionally, acts as a transcriptional activator in complex with isoform 2 of meis1, to induce posterior neural and neural crest gene expression, and thereby specify hindbrain and neural crest cell fate. Binds to a highly conserved region in the promoter of the neural crest gene zic3. Required for the nuclear transport or retention of isoform 2 of meis1. This chain is Pre-B-cell leukemia transcription factor 1 (pbx1), found in Xenopus laevis (African clawed frog).